Reading from the N-terminus, the 530-residue chain is Ubiquitin carboxyl-terminal hydrolase 17-like protein 11 (530 aa).

The 296-residue stretch at 80–375 (AGLQNMGNTC…QAYVLFYIQK (296 aa)) folds into the USP domain. Catalysis depends on Cys89, which acts as the Nucleophile. Catalysis depends on His334, which acts as the Proton acceptor. Composition is skewed to basic and acidic residues over residues 382–392 (SESVSRGREPR) and 398–413 (DTDR…RDHP). Disordered regions lie at residues 382 to 413 (SESV…RDHP) and 509 to 530 (RGRA…LVCQ). A compositionally biased stretch (basic residues) spans 510-524 (GRARRSKGKNKHSKR).

This sequence belongs to the peptidase C19 family. USP17 subfamily.

The protein localises to the nucleus. It is found in the endoplasmic reticulum. It catalyses the reaction Thiol-dependent hydrolysis of ester, thioester, amide, peptide and isopeptide bonds formed by the C-terminal Gly of ubiquitin (a 76-residue protein attached to proteins as an intracellular targeting signal).. Its function is as follows. Deubiquitinating enzyme that removes conjugated ubiquitin from specific proteins to regulate different cellular processes that may include cell proliferation, progression through the cell cycle, apoptosis, cell migration, and the cellular response to viral infection. The polypeptide is Ubiquitin carboxyl-terminal hydrolase 17-like protein 11 (USP17L11) (Homo sapiens (Human)).